The sequence spans 1345 residues: CRISPR-associated endonuclease Cas9 (1345 aa).

Aspartate 10 serves as the catalytic For RuvC-like nuclease domain. The Mg(2+) site is built by aspartate 10, glutamate 762, and glutamate 766. An HNH Cas9-type domain is found at 770 to 921 (TNQGRRNSQQ…DKAGFIKRQL (152 aa)). Histidine 840 functions as the Proton acceptor for HNH nuclease domain in the catalytic mechanism. Histidine 983 serves as a coordination point for Mg(2+).

Belongs to the CRISPR-associated protein Cas9 family. Subtype II-A subfamily. As to quaternary structure, monomer. Binds crRNA and tracrRNA. Requires Mg(2+) as cofactor.

Functionally, CRISPR (clustered regularly interspaced short palindromic repeat) is an adaptive immune system that provides protection against mobile genetic elements (viruses, transposable elements and conjugative plasmids). CRISPR clusters contain spacers, sequences complementary to antecedent mobile elements, and target invading nucleic acids. CRISPR clusters are transcribed and processed into CRISPR RNA (crRNA). In type II CRISPR systems correct processing of pre-crRNA requires a trans-encoded small RNA (tracrRNA), endogenous ribonuclease 3 (rnc) and this protein. The tracrRNA serves as a guide for ribonuclease 3-aided processing of pre-crRNA. Subsequently Cas9/crRNA/tracrRNA endonucleolytically cleaves linear or circular dsDNA target complementary to the spacer; Cas9 is inactive in the absence of the 2 guide RNAs (gRNA). Cas9 recognizes the protospacer adjacent motif (PAM) in the CRISPR repeat sequences to help distinguish self versus nonself, as targets within the bacterial CRISPR locus do not have PAMs. PAM recognition is also required for catalytic activity. Complements the gRNA coprocessing defect in a cas9 deletion in S.pyogenes strain 370 and cuts target plasmid in Cas9:gRNAs mixing experiments with S.thermophilus CRISPR3 from strain LMD-9. This Streptococcus mutans serotype c (strain ATCC 700610 / UA159) protein is CRISPR-associated endonuclease Cas9.